The sequence spans 67 residues: (2R)-sulfolactate sulfo-lyase subunit alpha (67 aa).

In terms of assembly, (2R)-sulfolactate sulfo-lyase is composed of a SuyA and a SuyB subunit.

The protein localises to the cytoplasm. The catalysed reaction is (2R)-3-sulfolactate = sulfite + pyruvate + H(+). Together with SuyB, desulfonates sulfolactate to pyruvate and sulfite. In Paracoccus pantotrophus (Thiosphaera pantotropha), this protein is (2R)-sulfolactate sulfo-lyase subunit alpha (suyA).